Consider the following 602-residue polypeptide: Elongation factor 4 (602 aa).

In terms of domain architecture, tr-type G spans 8–190; it reads DLIRNFSIVA…AIVHRLPPPK (183 aa). GTP contacts are provided by residues 20-25 and 137-140; these read DHGKST and NKID.

This sequence belongs to the TRAFAC class translation factor GTPase superfamily. Classic translation factor GTPase family. LepA subfamily.

It is found in the cell inner membrane. The enzyme catalyses GTP + H2O = GDP + phosphate + H(+). Required for accurate and efficient protein synthesis under certain stress conditions. May act as a fidelity factor of the translation reaction, by catalyzing a one-codon backward translocation of tRNAs on improperly translocated ribosomes. Back-translocation proceeds from a post-translocation (POST) complex to a pre-translocation (PRE) complex, thus giving elongation factor G a second chance to translocate the tRNAs correctly. Binds to ribosomes in a GTP-dependent manner. This chain is Elongation factor 4, found in Cereibacter sphaeroides (strain ATCC 17029 / ATH 2.4.9) (Rhodobacter sphaeroides).